Reading from the N-terminus, the 165-residue chain is Phosphopantetheine adenylyltransferase (165 aa).

Threonine 10 contacts substrate. ATP contacts are provided by residues 10-11 (TF) and histidine 18. 3 residues coordinate substrate: lysine 42, leucine 75, and arginine 89. Residues 90-92 (GVR), glutamate 100, and 125-131 (VSFISSS) contribute to the ATP site.

Belongs to the bacterial CoaD family. Homohexamer. Requires Mg(2+) as cofactor.

Its subcellular location is the cytoplasm. The catalysed reaction is (R)-4'-phosphopantetheine + ATP + H(+) = 3'-dephospho-CoA + diphosphate. It functions in the pathway cofactor biosynthesis; coenzyme A biosynthesis; CoA from (R)-pantothenate: step 4/5. In terms of biological role, reversibly transfers an adenylyl group from ATP to 4'-phosphopantetheine, yielding dephospho-CoA (dPCoA) and pyrophosphate. This chain is Phosphopantetheine adenylyltransferase, found in Buchnera aphidicola subsp. Schizaphis graminum (strain Sg).